We begin with the raw amino-acid sequence, 428 residues long: 3-phosphoshikimate 1-carboxyvinyltransferase (428 aa).

The 3-phosphoshikimate site is built by Lys-20, Ser-21, and Arg-25. Position 20 (Lys-20) interacts with phosphoenolpyruvate. Gly-93 and Arg-122 together coordinate phosphoenolpyruvate. 3-phosphoshikimate is bound by residues Ser-167, Gln-169, Asp-317, and Lys-344. A phosphoenolpyruvate-binding site is contributed by Gln-169. Residue Asp-317 is the Proton acceptor of the active site. Positions 348 and 390 each coordinate phosphoenolpyruvate.

Belongs to the EPSP synthase family. In terms of assembly, monomer.

The protein localises to the cytoplasm. The enzyme catalyses 3-phosphoshikimate + phosphoenolpyruvate = 5-O-(1-carboxyvinyl)-3-phosphoshikimate + phosphate. Its pathway is metabolic intermediate biosynthesis; chorismate biosynthesis; chorismate from D-erythrose 4-phosphate and phosphoenolpyruvate: step 6/7. Catalyzes the transfer of the enolpyruvyl moiety of phosphoenolpyruvate (PEP) to the 5-hydroxyl of shikimate-3-phosphate (S3P) to produce enolpyruvyl shikimate-3-phosphate and inorganic phosphate. The protein is 3-phosphoshikimate 1-carboxyvinyltransferase of Leptospira biflexa serovar Patoc (strain Patoc 1 / ATCC 23582 / Paris).